An 872-amino-acid chain; its full sequence is Probable GPI-anchored adhesin-like protein PGA25 (872 aa).

The signal sequence occupies residues M1–A19. The span at P43–T65 shows a compositional bias: low complexity. Disordered stretches follow at residues P43–P383, K492–D517, and P623–T809. Residues V66–Q83 show a composition bias toward polar residues. Composition is skewed to low complexity over residues N84–T110 and S125–S171. N92 carries an N-linked (GlcNAc...) asparagine glycan. Residues E196–E207 show a composition bias toward acidic residues. 3 stretches are compositionally biased toward low complexity: residues S208–T225, S242–T260, and S274–T293. N-linked (GlcNAc...) asparagine glycosylation is present at N290. The segment covering A317–T328 has biased composition (acidic residues). The segment covering T349–S363 has biased composition (low complexity). The span at E366–T376 shows a compositional bias: acidic residues. A compositionally biased stretch (polar residues) spans G495–S506. Composition is skewed to acidic residues over residues D624–D635 and D646–E659. 3 stretches are compositionally biased toward gly residues: residues S666–S692, S701–G710, and S731–S740. The span at S741 to G760 shows a compositional bias: low complexity. A compositionally biased stretch (gly residues) spans G761 to G771. Over residues D780 to D808 the composition is skewed to acidic residues. A845 carries GPI-anchor amidated alanine lipidation. A propeptide spans Q846–I872 (removed in mature form).

Belongs to the HYR1/IFF family. In terms of processing, the GPI-anchor is attached to the protein in the endoplasmic reticulum and serves to target the protein to the cell surface. There, the glucosamine-inositol phospholipid moiety is cleaved off and the GPI-modified mannoprotein is covalently attached via its lipidless GPI glycan remnant to the 1,6-beta-glucan of the outer cell wall layer.

The protein localises to the secreted. Its subcellular location is the cell wall. The protein resides in the membrane. Its function is as follows. Probable GPI-anchored cell wall protein involved in cell wall organization, hyphal growth, as well as in host-fungal interaction and virulence. The polypeptide is Probable GPI-anchored adhesin-like protein PGA25 (PGA25) (Candida albicans (strain SC5314 / ATCC MYA-2876) (Yeast)).